The following is a 595-amino-acid chain: MRTEYCGQINLSHVGQQVTLCGWVNRRRDLGSLIFIDMRDREGIVQVFFDPDRQEAFTLASELRNEFCIQIVGTVRARDEKNKNGDMATGEIEIFATELTIINRSEPLPLDSNHINSEEARLKYRYLDLRRPDMANRLKTRAKITSFVRRFMDDQGFLDIETPMLTKATPEGARDYLVPSRVHKGKFYALPQSPQLFKQLLMMSGFDRYYQIVKCFRDEDLRADRQPEFTQIDVETSFMTAPQVREVMERLVRELWQDVKSVDLGAFPSMTFAEAMRRYGSDKPDLRNPMELVDVADLLKNVEFKVFSGPANDVKGRVAALRVPGGAALSRKQIDDYAKFIETYGAKGLAYIKVNERAKGIEGITSPVAKFLNAEIVESILQRTAAADGDLIFFGADSAKVVADALGALRLKLGRDLNITNGSVWAPLWVLDFPMFEDDGEDGLTAMHHPFTAPKEMSPEQLKNAPETAIANAYDMVINGYEVGGGSVRIHNGQMQQTVFGILGITEQEQREKFGFLLDALKFGTPPHAGLAFGLDRLVMLLTGTDNIRDVIAFPKTTAAACLMTEAPNFANPASLTELGIEVVKKAKDRPSEND.

Glutamate 171 contributes to the L-aspartate binding site. The tract at residues 195–198 (QLFK) is aspartate. Arginine 217 contacts L-aspartate. Residues 217–219 (RDE) and glutamine 226 each bind ATP. Histidine 448 contributes to the L-aspartate binding site. ATP is bound at residue glutamate 482. Arginine 489 contributes to the L-aspartate binding site. Position 534–537 (534–537 (GLDR)) interacts with ATP.

It belongs to the class-II aminoacyl-tRNA synthetase family. Type 1 subfamily. In terms of assembly, homodimer.

It localises to the cytoplasm. It catalyses the reaction tRNA(Asp) + L-aspartate + ATP = L-aspartyl-tRNA(Asp) + AMP + diphosphate. In terms of biological role, catalyzes the attachment of L-aspartate to tRNA(Asp) in a two-step reaction: L-aspartate is first activated by ATP to form Asp-AMP and then transferred to the acceptor end of tRNA(Asp). The chain is Aspartate--tRNA ligase from Erwinia tasmaniensis (strain DSM 17950 / CFBP 7177 / CIP 109463 / NCPPB 4357 / Et1/99).